The chain runs to 139 residues: Putative pre-16S rRNA nuclease (139 aa).

Belongs to the YqgF nuclease family.

Its subcellular location is the cytoplasm. Its function is as follows. Could be a nuclease involved in processing of the 5'-end of pre-16S rRNA. The polypeptide is Putative pre-16S rRNA nuclease (Streptococcus pneumoniae serotype 19F (strain G54)).